The primary structure comprises 457 residues: B-cell linker protein (457 aa).

Residues 38–306 (KLKVKGPPSV…FPPTQKPVLQ (269 aa)) are disordered. A compositionally biased stretch (acidic residues) spans 57–74 (PADEEEQWSDDFDSDYEN). Phosphotyrosine; by SYK occurs at positions 72, 84, 96, 178, and 189. The span at 172-187 (LEDEADYVVPVEDNDE) shows a compositional bias: acidic residues. 2 stretches are compositionally biased toward polar residues: residues 206 to 218 (VNRS…SSKH) and 256 to 270 (PLKT…NASN). Residues 272-290 (CEEKPVPAERHRGSSHRQD) show a composition bias toward basic and acidic residues. The 108-residue stretch at 347-454 (WYAGACDRKS…KDSTRLKYAV (108 aa)) folds into the SH2 domain.

Associates with PLCG1, VAV1 and NCK1 in a B-cell antigen receptor-dependent fashion. Interacts with VAV3, PLCG2 and GRB2. Interacts through its SH2 domain with CD79A. Interacts (via SH2 domain) with SYK; phosphorylated and activated by SYK. Interacts (via SH2 domain) with SCIMP; this interaction is dependent on phosphorylation of SCIMP 'Tyr-120'. Following BCR activation, phosphorylated on tyrosine residues by SYK and LYN. When phosphorylated, serves as a scaffold to assemble downstream targets of antigen activation, including PLCG1, VAV1, GRB2 and NCK1. Phosphorylation of Tyr-84, Tyr-178 and Tyr-189 facilitates PLCG1 binding. Phosphorylation of Tyr-96 facilitates BTK binding. Phosphorylation of Tyr-72 facilitates VAV1 and NCK1 binding. Phosphorylation is required for both Ca(2+) and MAPK signaling pathways.

The protein resides in the cytoplasm. The protein localises to the cell membrane. Functions as a central linker protein, downstream of the B-cell receptor (BCR), bridging the SYK kinase to a multitude of signaling pathways and regulating biological outcomes of B-cell function and development. Plays a role in the activation of ERK/EPHB2, MAP kinase p38 and JNK. Modulates AP1 activation. Important for the activation of NF-kappa-B and NFAT. Plays an important role in BCR-mediated PLCG1 and PLCG2 activation and Ca(2+) mobilization and is required for trafficking of the BCR to late endosomes. However, does not seem to be required for pre-BCR-mediated activation of MAP kinase and phosphatidyl-inositol 3 (PI3) kinase signaling. May be required for the RAC1-JNK pathway. Plays a critical role in orchestrating the pro-B cell to pre-B cell transition. May play an important role in BCR-induced B-cell apoptosis. The protein is B-cell linker protein (Blnk) of Rattus norvegicus (Rat).